The primary structure comprises 269 residues: Indole-3-glycerol phosphate synthase (269 aa).

It belongs to the TrpC family.

The enzyme catalyses 1-(2-carboxyphenylamino)-1-deoxy-D-ribulose 5-phosphate + H(+) = (1S,2R)-1-C-(indol-3-yl)glycerol 3-phosphate + CO2 + H2O. The protein operates within amino-acid biosynthesis; L-tryptophan biosynthesis; L-tryptophan from chorismate: step 4/5. In Saccharopolyspora erythraea (strain ATCC 11635 / DSM 40517 / JCM 4748 / NBRC 13426 / NCIMB 8594 / NRRL 2338), this protein is Indole-3-glycerol phosphate synthase.